A 232-amino-acid chain; its full sequence is Large ribosomal subunit protein uL1 (232 aa).

It belongs to the universal ribosomal protein uL1 family. In terms of assembly, part of the 50S ribosomal subunit.

Binds directly to 23S rRNA. The L1 stalk is quite mobile in the ribosome, and is involved in E site tRNA release. In terms of biological role, protein L1 is also a translational repressor protein, it controls the translation of the L11 operon by binding to its mRNA. The chain is Large ribosomal subunit protein uL1 from Cereibacter sphaeroides (strain ATCC 17025 / ATH 2.4.3) (Rhodobacter sphaeroides).